The chain runs to 379 residues: MSGFLPFSRPAMGVEELAAVKEVLESGWITTGPKNQALEQAFCQLTGNQHAIAVSSATAGMHITLMALEIGKGDEVITPSLTWVSTLNMISLLGATPVMVDVDRDTLMVTPEAIEAAITPRTKAIIPVHYAGAPADIDAIRAIGERYGIAVIEDAAHAVGTYYKGRHIGAKGTAIFSFHAIKNITCAEGGLIVTDNENLARQLRMLKFHGLGVDAYDRHTWGRAPQAEVLTPGYKYNLTDINAAIALTQLVKLEHLNTRRREIAQQYQQALAALPFQPLSLPAWPHVHAWHLFIIRVDEQRCGISRDALMEALKERGIGTGLHFRAAHTQKYYRERFPTLSLPNTEWNSERICSLPLFPDMTTADADRVITALQQLAGQ.

Residue Lys182 is modified to N6-(pyridoxal phosphate)lysine.

The protein belongs to the DegT/DnrJ/EryC1 family. ArnB subfamily. As to quaternary structure, homodimer. The cofactor is pyridoxal 5'-phosphate.

It carries out the reaction UDP-4-amino-4-deoxy-beta-L-arabinose + 2-oxoglutarate = UDP-beta-L-threo-pentopyranos-4-ulose + L-glutamate. It participates in nucleotide-sugar biosynthesis; UDP-4-deoxy-4-formamido-beta-L-arabinose biosynthesis; UDP-4-deoxy-4-formamido-beta-L-arabinose from UDP-alpha-D-glucuronate: step 2/3. Its pathway is bacterial outer membrane biogenesis; lipopolysaccharide biosynthesis. In terms of biological role, catalyzes the conversion of UDP-4-keto-arabinose (UDP-Ara4O) to UDP-4-amino-4-deoxy-L-arabinose (UDP-L-Ara4N). The modified arabinose is attached to lipid A and is required for resistance to polymyxin and cationic antimicrobial peptides. In Escherichia coli O1:K1 / APEC, this protein is UDP-4-amino-4-deoxy-L-arabinose--oxoglutarate aminotransferase.